The sequence spans 879 residues: Alanine--tRNA ligase (879 aa).

Zn(2+) is bound by residues histidine 565, histidine 569, cysteine 674, and histidine 678.

This sequence belongs to the class-II aminoacyl-tRNA synthetase family. Requires Zn(2+) as cofactor.

It localises to the cytoplasm. It catalyses the reaction tRNA(Ala) + L-alanine + ATP = L-alanyl-tRNA(Ala) + AMP + diphosphate. Catalyzes the attachment of alanine to tRNA(Ala) in a two-step reaction: alanine is first activated by ATP to form Ala-AMP and then transferred to the acceptor end of tRNA(Ala). Also edits incorrectly charged Ser-tRNA(Ala) and Gly-tRNA(Ala) via its editing domain. This is Alanine--tRNA ligase from Gluconobacter oxydans (strain 621H) (Gluconobacter suboxydans).